A 136-amino-acid chain; its full sequence is Ciliary microtubule inner protein 1 (136 aa).

It is found in the cell projection. It localises to the cilium. The protein is Ciliary microtubule inner protein 1 (Cimip1) of Mus musculus (Mouse).